The primary structure comprises 147 residues: Probable disulfide formation protein (147 aa).

A helical transmembrane segment spans residues 9 to 28; the sequence is NYSLYFAWLTALIATLGSLY. A disulfide bridge links Cys-38 with Cys-41. The next 2 membrane-spanning stretches (helical) occupy residues 43-62 and 69-86; these read YQRVCIYPLTILLGIAAYRT and YALPLVVLGFLFSVYQYL. Cys-99 and Cys-106 are oxidised to a cystine. A helical transmembrane segment spans residues 115 to 138; it reads GFITLPFLGMLATLIMSFFLIMAF.

The protein belongs to the DsbB family. BdbC subfamily.

The protein localises to the cell inner membrane. Its function is as follows. Required for disulfide bond formation in some proteins. The chain is Probable disulfide formation protein from Coxiella burnetii (strain CbuG_Q212) (Coxiella burnetii (strain Q212)).